A 49-amino-acid polypeptide reads, in one-letter code: MARFPEAEERILNKKICMKCSARNAVRATRCRKCGYTNLRVKNKDVRRG.

This sequence belongs to the eukaryotic ribosomal protein eL40 family.

The polypeptide is Large ribosomal subunit protein eL40 (Methanococcoides burtonii (strain DSM 6242 / NBRC 107633 / OCM 468 / ACE-M)).